Reading from the N-terminus, the 313-residue chain is Probable cell division protein WhiA (313 aa).

The H-T-H motif DNA-binding region spans 274-308 (SLKELGELVPGGPISKSGVNHRLRKLNAYADELRA).

This sequence belongs to the WhiA family.

Involved in cell division and chromosome segregation. This chain is Probable cell division protein WhiA, found in Limosilactobacillus reuteri subsp. reuteri (strain JCM 1112) (Lactobacillus reuteri).